Reading from the N-terminus, the 826-residue chain is Putative ankyrin repeat protein RBE_0220 (826 aa).

ANK repeat units follow at residues Leu-308 to Ala-337, Ile-342 to Tyr-371, Asp-375 to Lys-404, Asn-445 to Ala-474, Asp-478 to Val-507, Thr-512 to Leu-541, Asp-545 to Lys-574, and Asn-578 to Lys-607.

This Rickettsia bellii (strain RML369-C) protein is Putative ankyrin repeat protein RBE_0220.